The chain runs to 336 residues: DNA-directed RNA polymerase subunit alpha (336 aa).

The tract at residues 1 to 232 is alpha N-terminal domain (alpha-NTD); it reads MIQKNWQELI…DQLGVFVNFD (232 aa). Residues 248–336 are alpha C-terminal domain (alpha-CTD); the sequence is FNPALLKKVD…DLAKRYEDQY (89 aa).

The protein belongs to the RNA polymerase alpha chain family. In terms of assembly, homodimer. The RNAP catalytic core consists of 2 alpha, 1 beta, 1 beta' and 1 omega subunit. When a sigma factor is associated with the core the holoenzyme is formed, which can initiate transcription.

The catalysed reaction is RNA(n) + a ribonucleoside 5'-triphosphate = RNA(n+1) + diphosphate. DNA-dependent RNA polymerase catalyzes the transcription of DNA into RNA using the four ribonucleoside triphosphates as substrates. The polypeptide is DNA-directed RNA polymerase subunit alpha (Rhizobium etli (strain CIAT 652)).